We begin with the raw amino-acid sequence, 238 residues long: Uridylate kinase (238 aa).

12–15 (KLSG) contacts ATP. Gly-54 provides a ligand contact to UMP. Gly-55 and Arg-59 together coordinate ATP. Residues Asp-74 and 135-142 (TGNPFFTT) each bind UMP. Thr-162, Tyr-168, and Asp-171 together coordinate ATP.

The protein belongs to the UMP kinase family. In terms of assembly, homohexamer.

It is found in the cytoplasm. It carries out the reaction UMP + ATP = UDP + ADP. The protein operates within pyrimidine metabolism; CTP biosynthesis via de novo pathway; UDP from UMP (UMPK route): step 1/1. With respect to regulation, inhibited by UTP. Catalyzes the reversible phosphorylation of UMP to UDP. The protein is Uridylate kinase of Herminiimonas arsenicoxydans.